A 132-amino-acid chain; its full sequence is MIVRTLEQARQSDRRVKADNWESVRMLLKDDNMGFSFHITTLYANKETPIHYQNHLESVYCISGEGEVETVADGEVHAIKPGTLYVLDKHDKHLLRAFSEMTVACVFNPPLNGKETHDENGVYPLEAETIME.

This sequence belongs to the ectoine synthase family.

It carries out the reaction (2S)-4-acetamido-2-aminobutanoate = L-ectoine + H2O. Its pathway is amine and polyamine biosynthesis; ectoine biosynthesis; L-ectoine from L-aspartate 4-semialdehyde: step 3/3. Catalyzes the circularization of gamma-N-acetyl-alpha,gamma-diaminobutyric acid (ADABA) to ectoine (1,4,5,6-tetrahydro-2-methyl-4-pyrimidine carboxylic acid), which is an excellent osmoprotectant. This is L-ectoine synthase from Hahella chejuensis (strain KCTC 2396).